A 2474-amino-acid chain; its full sequence is Highly reducing polyketide synthase 40 (2474 aa).

Residues 1-294 (MFKETEIQQR…GSNAHIIIDD (294 aa)) form the Ketosynthase family 3 (KS3) domain. Active-site for beta-ketoacyl synthase activity residues include Cys-42, His-177, and His-217. One can recognise a Malonyl-CoA:ACP transacylase (MAT) domain in the interval 459 to 798 (FVFTGQGAQW…GYESVLRRGT (340 aa)). The N-terminal hotdog fold stretch occupies residues 864 to 998 (HELLGAPVPD…GLVVTEYEQP (135 aa)). The PKS/mFAS DH domain occupies 864–1182 (HELLGAPVPD…ITTVARSEGA (319 aa)). Residue His-896 is the Proton acceptor; for dehydratase activity of the active site. The interval 1027-1182 (KVETSFRQLY…ITTVARSEGA (156 aa)) is C-terminal hotdog fold. Residue Asp-1093 is the Proton donor; for dehydratase activity of the active site. The tract at residues 1232 to 1535 (VEMMCFLYIK…DLHIYDFPDH (304 aa)) is methyltransferase (CMet) domain. Residues 1770–2063 (GLLDSLQFQD…SGSHMGKLVL (294 aa)) form the Enoyl reductase (ER) domain. Residues 2087 to 2263 (ASYLLSGGLG…PGVAVDLGMI (177 aa)) form the Ketoreductase (KR) domain. Residues 2385–2462 (DAAKIVSAAI…ELAELAAKRS (78 aa)) form the Carrier domain. The residue at position 2422 (Ser-2422) is an O-(pantetheine 4'-phosphoryl)serine.

The cofactor is pantetheine 4'-phosphate.

Its pathway is secondary metabolite biosynthesis. Highly reducing polyketide synthase; part of the gene cluster that mediates the biosynthesis of the gamma-pyrones fusapyrone (FPY) and deoxyfusapyrone (dFPY). FPY is an undecaketide and thus likely synthesized by the polyketide synthase FPY1 from acetyl-CoA functioning as starter unit and the addition of 10 malonyl-CoA extender units by successive Claisen-condensations. Next to this, FPY shares some rare features: C-glycosylated 4-deoxyglucose at C-3, a gem-dimethyl group at C-13, and an alpha-beta to beta-gamma double bond shift at C-20. During FPY biosynthesis mono-C-methyl groups are transferred to the tetra-, penta-, hexa- and heptaketide, while two C-methyl groups are transferred to the nonaketide, suggesting that the CMet domain is programmed to selectively catalyze two successive C-alpha-methylation reactions of the nonaketide, while other alpha-carbons are non- or mono-methylated only. While the origin of the 4'-deoxyglucose moiety remains opaque, its transfer to C-3 is most likely mediated by the C-glycosyltransferase FPY2. Next to this, the hydroxyl group present at C-33 and discriminating between FPY and dFPY, is likely to be installed by the cytochrome P450 monooxygenase FPY7. No putative function can be predicted for the remaining genes FPY3-FPY6. The polypeptide is Highly reducing polyketide synthase 40 (Fusarium mangiferae (Mango malformation disease fungus)).